We begin with the raw amino-acid sequence, 236 residues long: Large ribosomal subunit protein uL1 (236 aa).

It belongs to the universal ribosomal protein uL1 family. In terms of assembly, part of the 50S ribosomal subunit.

Functionally, binds directly to 23S rRNA. The L1 stalk is quite mobile in the ribosome, and is involved in E site tRNA release. Protein L1 is also a translational repressor protein, it controls the translation of the L11 operon by binding to its mRNA. The sequence is that of Large ribosomal subunit protein uL1 from Kocuria rhizophila (strain ATCC 9341 / DSM 348 / NBRC 103217 / DC2201).